A 665-amino-acid chain; its full sequence is RNA-directed RNA polymerase (665 aa).

In terms of domain architecture, RdRp catalytic spans 310 to 485 (NKEEKVKEWS…LKEGKVNPSP (176 aa)). Positions 454, 491, and 495 each coordinate Mg(2+).

In terms of assembly, part of the packaging complex composed of RDRP, P4 and P7. Interacts with P7. The cofactor is Mg(2+). Requires Mn(2+) as cofactor.

The protein localises to the virion. It carries out the reaction RNA(n) + a ribonucleoside 5'-triphosphate = RNA(n+1) + diphosphate. Its function is as follows. Rna-dependent RNA polymerase part of the packaging complex that packages the viral RNA segments, replicate them into a double-stranded form and transcribe them. The sequence is that of RNA-directed RNA polymerase (P2) from Pseudomonas phage phi6 (Bacteriophage phi-6).